A 99-amino-acid chain; its full sequence is Transposase InsE for insertion sequence IS3A (99 aa).

A disordered region spans residues 1–21 (MTKTVSTSKKPRKQHSPEFRS).

Belongs to the transposase 8 family.

Functionally, involved in the transposition of the insertion sequence IS3. This chain is Transposase InsE for insertion sequence IS3A (insE1), found in Escherichia coli (strain K12).